The chain runs to 126 residues: Fluoride-specific ion channel FluC (126 aa).

4 consecutive transmembrane segments (helical) span residues 2–22, 37–57, 65–85, and 101–121; these read LTFA…GAWL, WGTL…VALI, AWIR…FSTF, and AAAY…LATV. Positions 77 and 80 each coordinate Na(+).

The protein belongs to the fluoride channel Fluc/FEX (TC 1.A.43) family.

It is found in the cell inner membrane. It catalyses the reaction fluoride(in) = fluoride(out). Na(+) is not transported, but it plays an essential structural role and its presence is essential for fluoride channel function. Its function is as follows. Fluoride-specific ion channel. Important for reducing fluoride concentration in the cell, thus reducing its toxicity. This Bordetella parapertussis (strain 12822 / ATCC BAA-587 / NCTC 13253) protein is Fluoride-specific ion channel FluC.